The following is a 309-amino-acid chain: Large ribosomal subunit protein mL45 (309 aa).

It belongs to the mitochondrion-specific ribosomal protein mL45 family. Component of the mitochondrial ribosome large subunit (39S) which comprises a 16S rRNA and about 50 distinct proteins.

The protein localises to the mitochondrion. In terms of biological role, component of the mitochondrial large ribosomal subunit (mt-LSU). Within the mitochondrial ribosomes, required to direct the nascent polypeptide toward the tunnel exit and position the exit at a distance from the membrane surface. This is Large ribosomal subunit protein mL45 (mrpl45) from Xenopus tropicalis (Western clawed frog).